Consider the following 149-residue polypeptide: MEQSFIMIKPDGVQRGLIGDIISRFEKKGFYLRGMKFMNVERSFAQQHYADLSDKPFFPGLVEYIISGPVVAMVWEGKDVVATGRRIIGATRPWEAAPGTIRADYAVEVGRNVIHGSDSVDNGKKEIALWFPEGLAEWRSNLHPWIYES.

ATP-binding residues include Lys9, Phe57, Arg85, Thr91, Arg102, and Asn112. The active-site Pros-phosphohistidine intermediate is His115.

It belongs to the NDK family. As to quaternary structure, homohexamer. Mg(2+) serves as cofactor.

The enzyme catalyses a 2'-deoxyribonucleoside 5'-diphosphate + ATP = a 2'-deoxyribonucleoside 5'-triphosphate + ADP. It catalyses the reaction a ribonucleoside 5'-diphosphate + ATP = a ribonucleoside 5'-triphosphate + ADP. Major role in the synthesis of nucleoside triphosphates other than ATP. The ATP gamma phosphate is transferred to the NDP beta phosphate via a ping-pong mechanism, using a phosphorylated active-site intermediate. This NDK is microtubule-associated. The protein is Nucleoside diphosphate kinase 1 (NDKR) of Oryza sativa subsp. japonica (Rice).